The primary structure comprises 516 residues: Bifunctional purine biosynthesis protein PurH (516 aa).

The 146-residue stretch at 1 to 146 folds into the MGS-like domain; that stretch reads MAPFALLSVS…KNHADVAVLT (146 aa).

It belongs to the PurH family.

It carries out the reaction (6R)-10-formyltetrahydrofolate + 5-amino-1-(5-phospho-beta-D-ribosyl)imidazole-4-carboxamide = 5-formamido-1-(5-phospho-D-ribosyl)imidazole-4-carboxamide + (6S)-5,6,7,8-tetrahydrofolate. The enzyme catalyses IMP + H2O = 5-formamido-1-(5-phospho-D-ribosyl)imidazole-4-carboxamide. It functions in the pathway purine metabolism; IMP biosynthesis via de novo pathway; 5-formamido-1-(5-phospho-D-ribosyl)imidazole-4-carboxamide from 5-amino-1-(5-phospho-D-ribosyl)imidazole-4-carboxamide (10-formyl THF route): step 1/1. It participates in purine metabolism; IMP biosynthesis via de novo pathway; IMP from 5-formamido-1-(5-phospho-D-ribosyl)imidazole-4-carboxamide: step 1/1. The chain is Bifunctional purine biosynthesis protein PurH from Parasynechococcus marenigrum (strain WH8102).